The chain runs to 148 residues: 3-dehydroquinate dehydratase (148 aa).

Tyr23 functions as the Proton acceptor in the catalytic mechanism. Residues Asn75, His81, and Asp88 each contribute to the substrate site. His101 serves as the catalytic Proton donor. Substrate contacts are provided by residues 102-103 and Arg112; that span reads LS.

Belongs to the type-II 3-dehydroquinase family. In terms of assembly, homododecamer.

The catalysed reaction is 3-dehydroquinate = 3-dehydroshikimate + H2O. It participates in metabolic intermediate biosynthesis; chorismate biosynthesis; chorismate from D-erythrose 4-phosphate and phosphoenolpyruvate: step 3/7. Functionally, catalyzes a trans-dehydration via an enolate intermediate. The polypeptide is 3-dehydroquinate dehydratase (Halorhodospira halophila (strain DSM 244 / SL1) (Ectothiorhodospira halophila (strain DSM 244 / SL1))).